A 447-amino-acid polypeptide reads, in one-letter code: Zinc finger protein ZIC 1 (447 aa).

A C2H2-type 1; atypical zinc finger spans residues 225 to 260; it reads LICKWIEPEQLANPKKSCNKTFSTMHELVTHVTVEH. Residues 269 to 296 form a C2H2-type 2; atypical zinc finger; the sequence is HICFWEECPREGKPFKAKYKLVNHIRVH. C2H2-type zinc fingers lie at residues 302–326, 332–356, and 362–384; these read FPCP…KRTH, FKCE…MHVH, and YLCK…MKVH. The segment at 375–434 is disordered; it reads SSLRKHMKVHESSSQGSQPSPAASSGYESSTPPTIVSPTTDNPTTSSMSPSSSAVHHTAG. The segment covering 386-427 has biased composition (low complexity); the sequence is SSSQGSQPSPAASSGYESSTPPTIVSPTTDNPTTSSMSPSSS.

It belongs to the GLI C2H2-type zinc-finger protein family. Interacts (via the C2H2-type domains 3, 4 and 5) with MDFIC (via the C2H2-type domains 3, 4 and 5). Interacts with GLI1; the interaction enhances transcription activation. Interacts with GLI2. Interacts with GLI3; the interaction enhances transcription activation. Expressed in osteoblasts (at protein level). Expressed in the CNS. A high level expression is seen in the cerebellum, while a low level expression is seen in the olfactory bulb, diencephalon, and brainstem. Expressed in lumbar spine and iliac crest.

The protein localises to the nucleus. It localises to the cytoplasm. In terms of biological role, acts as a transcriptional activator. Involved in neurogenesis. Plays important roles in the early stage of organogenesis of the CNS, as well as during dorsal spinal cord development and maturation of the cerebellum. Involved in the spatial distribution of mossy fiber (MF) neurons within the pontine gray nucleus (PGN). Plays a role in the regulation of MF axon pathway choice. Promotes MF migration towards ipsilaterally-located cerebellar territories. May have a role in shear flow mechanotransduction in osteocytes. Retains nuclear GLI1 and GLI3 in the cytoplasm. Binds to the minimal GLI-consensus sequence 5'-TGGGTGGTC-3'. The protein is Zinc finger protein ZIC 1 (Zic1) of Mus musculus (Mouse).